A 658-amino-acid polypeptide reads, in one-letter code: Carnitine O-palmitoyltransferase 2, mitochondrial (658 aa).

A mitochondrion-targeting transit peptide spans 1–25 (MVPRLLLRAWPRGPAVGPGAPSRPL). Residues 26–178 (SAGSGPGQYL…GLLEPEVFHL (153 aa)) are Mitochondrial matrix-facing. N6-succinyllysine is present on lysine 69. Lysine 79 is subject to N6-acetyllysine. An N6-succinyllysine modification is found at lysine 85. Positions 179–208 (NPAKSDTITFKRLIRFVPSSLSWYGAYLVN) form an intramembrane region, note=Mitochondrial inner membrane. Residues 209–658 (AYPLDMSQYF…DALEGKSIKS (450 aa)) lie on the Mitochondrial matrix side of the membrane. Residue lysine 239 is modified to N6-acetyllysine; alternate. The residue at position 239 (lysine 239) is an N6-succinyllysine; alternate. Lysine 305 carries the N6-acetyllysine modification. Histidine 372 functions as the Proton acceptor in the catalytic mechanism. N6-succinyllysine is present on residues lysine 424 and lysine 439. 452–464 (GKEFLKKQKLSPD) contributes to the CoA binding site. Residues tyrosine 486, serine 488, and threonine 499 each coordinate (R)-carnitine. 2 positions are modified to N6-acetyllysine; alternate: lysine 510 and lysine 544. 2 positions are modified to N6-succinyllysine; alternate: lysine 510 and lysine 544.

The protein belongs to the carnitine/choline acetyltransferase family.

It is found in the mitochondrion inner membrane. The catalysed reaction is (R)-carnitine + hexadecanoyl-CoA = O-hexadecanoyl-(R)-carnitine + CoA. The enzyme catalyses octanoyl-CoA + (R)-carnitine = O-octanoyl-(R)-carnitine + CoA. It catalyses the reaction decanoyl-CoA + (R)-carnitine = O-decanoyl-(R)-carnitine + CoA. It carries out the reaction dodecanoyl-CoA + (R)-carnitine = O-dodecanoyl-R-carnitine + CoA. The catalysed reaction is tetradecanoyl-CoA + (R)-carnitine = O-tetradecanoyl-(R)-carnitine + CoA. The enzyme catalyses (R)-carnitine + octadecanoyl-CoA = O-octadecanoyl-(R)-carnitine + CoA. It catalyses the reaction eicosanoyl-CoA + (R)-carnitine = O-eicosanoyl-(R)-carnitine + CoA. It carries out the reaction (9Z)-tetradecenoyl-CoA + (R)-carnitine = O-(9Z)-tetradecenoyl-(R)-carnitine + CoA. The catalysed reaction is (5Z)-tetradecenoyl-CoA + (R)-carnitine = O-(5Z)-tetradecenoyl-(R)-carnitine + CoA. The enzyme catalyses (R)-carnitine + (9Z)-octadecenoyl-CoA = O-(9Z)-octadecenoyl-(R)-carnitine + CoA. It catalyses the reaction 4,8-dimethylnonanoyl-CoA + (R)-carnitine = O-4,8-dimethylnonanoyl-(R)-carnitine + CoA. It functions in the pathway lipid metabolism; fatty acid beta-oxidation. With respect to regulation, inhibited by trans-2-hexadecanoyl-CoA. Involved in the intramitochondrial synthesis of acylcarnitines from accumulated acyl-CoA metabolites. Reconverts acylcarnitines back into the respective acyl-CoA esters that can then undergo beta-oxidation, an essential step for the mitochondrial uptake of long-chain fatty acids and their subsequent beta-oxidation in the mitochondrion. Active with medium (C8-C12) and long-chain (C14-C18) acyl-CoA esters. This is Carnitine O-palmitoyltransferase 2, mitochondrial from Homo sapiens (Human).